We begin with the raw amino-acid sequence, 255 residues long: Imidazole glycerol phosphate synthase subunit HisF (255 aa).

Catalysis depends on residues Asp-12 and Asp-131.

It belongs to the HisA/HisF family. As to quaternary structure, heterodimer of HisH and HisF.

It is found in the cytoplasm. It carries out the reaction 5-[(5-phospho-1-deoxy-D-ribulos-1-ylimino)methylamino]-1-(5-phospho-beta-D-ribosyl)imidazole-4-carboxamide + L-glutamine = D-erythro-1-(imidazol-4-yl)glycerol 3-phosphate + 5-amino-1-(5-phospho-beta-D-ribosyl)imidazole-4-carboxamide + L-glutamate + H(+). It functions in the pathway amino-acid biosynthesis; L-histidine biosynthesis; L-histidine from 5-phospho-alpha-D-ribose 1-diphosphate: step 5/9. In terms of biological role, IGPS catalyzes the conversion of PRFAR and glutamine to IGP, AICAR and glutamate. The HisF subunit catalyzes the cyclization activity that produces IGP and AICAR from PRFAR using the ammonia provided by the HisH subunit. This chain is Imidazole glycerol phosphate synthase subunit HisF, found in Neisseria meningitidis serogroup C (strain 053442).